The sequence spans 116 residues: uncharacterized protein (116 aa).

This is an uncharacterized protein from Acidianus filamentous virus 2 (isolate Italy/Pozzuoli) (AFV-2).